The sequence spans 415 residues: Queuine tRNA-ribosyltransferase accessory subunit 2 (415 aa).

Zn(2+) contacts are provided by Cys351, Cys353, Cys356, and His382.

This sequence belongs to the queuine tRNA-ribosyltransferase family. QTRT2 subfamily. Heterodimer of a catalytic subunit QTRT1 and an accessory subunit QTRT2. It depends on Zn(2+) as a cofactor.

The protein localises to the cytoplasm. Its subcellular location is the mitochondrion outer membrane. Functionally, non-catalytic subunit of the queuine tRNA-ribosyltransferase (TGT) that catalyzes the base-exchange of a guanine (G) residue with queuine (Q) at position 34 (anticodon wobble position) in tRNAs with GU(N) anticodons (tRNA-Asp, -Asn, -His and -Tyr), resulting in the hypermodified nucleoside queuosine (7-(((4,5-cis-dihydroxy-2-cyclopenten-1-yl)amino)methyl)-7-deazaguanosine). This chain is Queuine tRNA-ribosyltransferase accessory subunit 2, found in Pongo abelii (Sumatran orangutan).